The following is an 85-amino-acid chain: ATP synthase subunit c (85 aa).

The next 2 helical transmembrane spans lie at 10–30 and 53–73; these read IAVA…FAIL and FIVA…ALFF.

Belongs to the ATPase C chain family. In terms of assembly, F-type ATPases have 2 components, F(1) - the catalytic core - and F(0) - the membrane proton channel. F(1) has five subunits: alpha(3), beta(3), gamma(1), delta(1), epsilon(1). F(0) has three main subunits: a(1), b(2) and c(10-14). The alpha and beta chains form an alternating ring which encloses part of the gamma chain. F(1) is attached to F(0) by a central stalk formed by the gamma and epsilon chains, while a peripheral stalk is formed by the delta and b chains.

It localises to the cell inner membrane. F(1)F(0) ATP synthase produces ATP from ADP in the presence of a proton or sodium gradient. F-type ATPases consist of two structural domains, F(1) containing the extramembraneous catalytic core and F(0) containing the membrane proton channel, linked together by a central stalk and a peripheral stalk. During catalysis, ATP synthesis in the catalytic domain of F(1) is coupled via a rotary mechanism of the central stalk subunits to proton translocation. Its function is as follows. Key component of the F(0) channel; it plays a direct role in translocation across the membrane. A homomeric c-ring of between 10-14 subunits forms the central stalk rotor element with the F(1) delta and epsilon subunits. This is ATP synthase subunit c from Shewanella halifaxensis (strain HAW-EB4).